A 229-amino-acid polypeptide reads, in one-letter code: Probable GTP-binding protein EngB (229 aa).

The EngB-type G domain occupies 53–228; it reads DLPEVAFAGR…RAEIVRLCID (176 aa). Residues 61 to 68, 88 to 92, 106 to 109, 173 to 176, and 207 to 209 contribute to the GTP site; these read GRSNVGKS, GRTRE, DLPG, TKAD, and TSS. Mg(2+) contacts are provided by S68 and T90.

Belongs to the TRAFAC class TrmE-Era-EngA-EngB-Septin-like GTPase superfamily. EngB GTPase family. The cofactor is Mg(2+).

Functionally, necessary for normal cell division and for the maintenance of normal septation. In Caulobacter vibrioides (strain NA1000 / CB15N) (Caulobacter crescentus), this protein is Probable GTP-binding protein EngB.